The primary structure comprises 68 residues: Cx9C motif-containing protein 4 (68 aa).

The CHCH domain occupies 4 to 46 (KDPCQKQACEIQKCLQANSYMESKCQAVIQELRKCCAQYPKGR). Short sequence motifs (cx9C motif) lie at residues 7-17 (CQKQACEIQKC) and 28-38 (CQAVIQELRKC). 3 disulfides stabilise this stretch: Cys-7–Cys-38, Cys-17–Cys-28, and Cys-39–Cys-50.

It belongs to the CMC4 family. As to expression, expressed in many tissues with a relatively high level in skeletal muscle.

Its subcellular location is the mitochondrion. This is Cx9C motif-containing protein 4 (CMC4) from Homo sapiens (Human).